The sequence spans 131 residues: Fumarate reductase subunit C (131 aa).

3 helical membrane-spanning segments follow: residues 30–50 (EGTAVPTVWFSIELIFGLFAL), 57–77 (WMGFVGFLQNPVVVILNLITL), and 109–129 (IIKGLWVVTAVVTVVILYVAL).

It belongs to the FrdC family. As to quaternary structure, part of an enzyme complex containing four subunits: a flavoprotein (FrdA), an iron-sulfur protein (FrdB), and two hydrophobic anchor proteins (FrdC and FrdD).

It is found in the cell inner membrane. Its function is as follows. Two distinct, membrane-bound, FAD-containing enzymes are responsible for the catalysis of fumarate and succinate interconversion; fumarate reductase is used in anaerobic growth, and succinate dehydrogenase is used in aerobic growth. Anchors the catalytic components of the fumarate reductase complex to the cell inner membrane, binds quinones. The chain is Fumarate reductase subunit C from Salmonella dublin (strain CT_02021853).